We begin with the raw amino-acid sequence, 61 residues long: MKLSALSLAFAIILMMTIMYTKADADASADAEADADAEAEAFWGALLAAAIPAITSAIQGK.

Residues 1 to 23 (MKLSALSLAFAIILMMTIMYTKA) form the signal peptide. The propeptide occupies 24–41 (DADASADAEADADAEAEA). Q59 is modified (glutamine amide).

The protein belongs to the formicidae venom precursor-01 superfamily. Truncated sequences of this peptide have also been found in the venom. It is possible they have been cleaved in the venom. In terms of tissue distribution, expressed by the venom gland.

It localises to the secreted. Acidic peptide with potent hemolytic activities. It also shows low antimicrobial activities against E.coli (MIC=50uM), as well as histamine-releasing activity (28.3% at 10 uM). Does not have activity against S.aureus, and S.cerevisiae. The protein is U-poneritoxin(01)-Om5b of Odontomachus monticola (Trap-jaw ant).